The following is a 101-amino-acid chain: Thyrotropin subunit beta (101 aa).

Intrachain disulfides connect Cys2–Cys88, Cys10–Cys66, Cys14–Cys68, and Cys71–Cys78. N-linked (GlcNAc...) asparagine glycosylation is present at Asn6.

The protein belongs to the glycoprotein hormones subunit beta family. In terms of assembly, heterodimer of a common alpha chain and a unique beta chain which confers biological specificity to thyrotropin, lutropin, follitropin and gonadotropin.

The protein resides in the secreted. Functionally, indispensable for the control of thyroid structure and metabolism. The protein is Thyrotropin subunit beta (TSHB) of Phodopus sungorus (Striped hairy-footed hamster).